The following is a 491-amino-acid chain: Aspartyl/glutamyl-tRNA(Asn/Gln) amidotransferase subunit B (491 aa).

It belongs to the GatB/GatE family. GatB subfamily. Heterotrimer of A, B and C subunits.

It carries out the reaction L-glutamyl-tRNA(Gln) + L-glutamine + ATP + H2O = L-glutaminyl-tRNA(Gln) + L-glutamate + ADP + phosphate + H(+). It catalyses the reaction L-aspartyl-tRNA(Asn) + L-glutamine + ATP + H2O = L-asparaginyl-tRNA(Asn) + L-glutamate + ADP + phosphate + 2 H(+). Functionally, allows the formation of correctly charged Asn-tRNA(Asn) or Gln-tRNA(Gln) through the transamidation of misacylated Asp-tRNA(Asn) or Glu-tRNA(Gln) in organisms which lack either or both of asparaginyl-tRNA or glutaminyl-tRNA synthetases. The reaction takes place in the presence of glutamine and ATP through an activated phospho-Asp-tRNA(Asn) or phospho-Glu-tRNA(Gln). This Burkholderia lata (strain ATCC 17760 / DSM 23089 / LMG 22485 / NCIMB 9086 / R18194 / 383) protein is Aspartyl/glutamyl-tRNA(Asn/Gln) amidotransferase subunit B.